Here is a 361-residue protein sequence, read N- to C-terminus: Methionine import ATP-binding protein MetN (361 aa).

Residues 22 to 257 form the ABC transporter domain; it reads VRLIDVKRRF…PQTDITRSLL (236 aa). 54–61 serves as a coordination point for ATP; it reads GRSGAGKS.

The protein belongs to the ABC transporter superfamily. Methionine importer (TC 3.A.1.24) family. In terms of assembly, the complex is composed of two ATP-binding proteins (MetN), two transmembrane proteins (MetI) and a solute-binding protein (MetQ).

It localises to the cell inner membrane. It carries out the reaction L-methionine(out) + ATP + H2O = L-methionine(in) + ADP + phosphate + H(+). It catalyses the reaction D-methionine(out) + ATP + H2O = D-methionine(in) + ADP + phosphate + H(+). Functionally, part of the ABC transporter complex MetNIQ involved in methionine import. Responsible for energy coupling to the transport system. This Rhizobium etli (strain ATCC 51251 / DSM 11541 / JCM 21823 / NBRC 15573 / CFN 42) protein is Methionine import ATP-binding protein MetN.